The sequence spans 257 residues: Type III pantothenate kinase (257 aa).

6–13 (DSGNTNTV) is an ATP binding site. A substrate-binding site is contributed by 108–111 (GADR). The Proton acceptor role is filled by aspartate 110. Aspartate 130 provides a ligand contact to K(+). Residue threonine 133 participates in ATP binding. Threonine 185 is a substrate binding site.

The protein belongs to the type III pantothenate kinase family. As to quaternary structure, homodimer. NH4(+) serves as cofactor. Requires K(+) as cofactor.

The protein localises to the cytoplasm. It carries out the reaction (R)-pantothenate + ATP = (R)-4'-phosphopantothenate + ADP + H(+). Its pathway is cofactor biosynthesis; coenzyme A biosynthesis; CoA from (R)-pantothenate: step 1/5. Catalyzes the phosphorylation of pantothenate (Pan), the first step in CoA biosynthesis. The protein is Type III pantothenate kinase of Rhodospirillum rubrum (strain ATCC 11170 / ATH 1.1.1 / DSM 467 / LMG 4362 / NCIMB 8255 / S1).